Consider the following 354-residue polypeptide: MSLEENLSRVVARHDELRALLSTSAGGGEGFVRMSRELADLAPVVEAIGRLDDAKAELAGARALLDDPDMRDLAREEVLRLEAEIPALEHGVKLLLLPRDEADDRGVILEVRAGTGGDEAALFAGDLLRMYERYAQERGWRFEVMEASDTDIGGIKEASAAISGRGVFARLKFESGVHRVQRVPVTEGGGRIHTSAATVAVLPEAEEVDVEIEEKDLRIDTYRSQGAGGQHVNTTDSAVRITHLPSGVVAQCQDEKSQHKNKAKAMRMLRTKLYDHARQTADDARAEARRVQVGSGDRSERIRTYNFPQGRVTDHRIGLTLHRLPEVLAGTALDEVIEPLIAEDQATRMAEIGG.

An N5-methylglutamine modification is found at Gln-230.

The protein belongs to the prokaryotic/mitochondrial release factor family. Post-translationally, methylated by PrmC. Methylation increases the termination efficiency of RF1.

The protein resides in the cytoplasm. Functionally, peptide chain release factor 1 directs the termination of translation in response to the peptide chain termination codons UAG and UAA. This Rhodospirillum rubrum (strain ATCC 11170 / ATH 1.1.1 / DSM 467 / LMG 4362 / NCIMB 8255 / S1) protein is Peptide chain release factor 1.